Here is a 385-residue protein sequence, read N- to C-terminus: MKDVILIANAGSSSLKISIFAIQNKRVNDKIYNIFLEKNNNKILFYINQQKESTTSIKDDPIEMMINLFEEWWKKQSALNLIATGHRIVHGGKNFNKPVVVNKKVIKELRVLIPLSPLHQPYNLQVLDLFFQKYKAISHIICFDTSFHCTNSPITKAFGLPKQYYDKGIMRYGFHGLSYQYVSSHFKEITMEDLPPKAIIAHLGSGSSLCAIKNGLSLTSSMGFSVLDGVMMATRPGNLDPGVVLYLINNEKMTINEITELLYKKSGLLGMSGESSDMRTLIASNSHDSKFAVDLFVYRIVLEIGKLIAALEGIDCLIFTAGVGQNSPVIREMISKKLSWLGIKIDYEKNQKNEHRISTKGSKIKVFVVPTNEELIIAEEVMKFL.

Residue N9 participates in Mg(2+) binding. ATP is bound at residue K16. Residue R87 participates in substrate binding. The Proton donor/acceptor role is filled by D144. ATP-binding positions include 202–206 (HLGSG) and 277–279 (DMR). Mg(2+) is bound at residue E373.

This sequence belongs to the acetokinase family. Homodimer. The cofactor is Mg(2+). It depends on Mn(2+) as a cofactor.

It is found in the cytoplasm. It carries out the reaction acetate + ATP = acetyl phosphate + ADP. It functions in the pathway metabolic intermediate biosynthesis; acetyl-CoA biosynthesis; acetyl-CoA from acetate: step 1/2. Its function is as follows. Catalyzes the formation of acetyl phosphate from acetate and ATP. Can also catalyze the reverse reaction. The chain is Acetate kinase from Rickettsia prowazekii (strain Madrid E).